Reading from the N-terminus, the 150-residue chain is Classical arabinogalactan protein 6 (150 aa).

The signal sequence occupies residues 1–20; sequence MARQFVVLVLLTLTIATAFA. Composition is skewed to low complexity over residues 19–75 and 85–98; these read FAAD…SPAA and SASS…APTV. Positions 19–131 are disordered; it reads FAADAPSASP…ESPKSGAVTT (113 aa). The GPI-anchor amidated serine moiety is linked to residue Ser126. The propeptide at 127 to 150 is removed in mature form; it reads GAVTTAKFSVVGTVATVGFFFFSF.

It belongs to the classical AGP family. Post-translationally, O-glycosylated on the hydroxyproline residues. In terms of tissue distribution, expressed in the anthers.

It localises to the cell membrane. Its function is as follows. Proteoglycan that seems to be implicated in diverse developmental roles such as differentiation, cell-cell recognition, embryogenesis and programmed cell death. Plays an important role during the formation of the nexine layer of the pollen wall. This is Classical arabinogalactan protein 6 (AGP6) from Arabidopsis thaliana (Mouse-ear cress).